Reading from the N-terminus, the 124-residue chain is uncharacterized protein (124 aa).

This is an uncharacterized protein from Acanthamoeba polyphaga (Amoeba).